A 143-amino-acid chain; its full sequence is D-aminoacyl-tRNA deacylase (143 aa).

A Gly-cisPro motif, important for rejection of L-amino acids motif is present at residues 135 to 136; the sequence is GP.

The protein belongs to the DTD family. In terms of assembly, homodimer.

The protein resides in the cytoplasm. The enzyme catalyses glycyl-tRNA(Ala) + H2O = tRNA(Ala) + glycine + H(+). It carries out the reaction a D-aminoacyl-tRNA + H2O = a tRNA + a D-alpha-amino acid + H(+). Its function is as follows. An aminoacyl-tRNA editing enzyme that deacylates mischarged D-aminoacyl-tRNAs. Also deacylates mischarged glycyl-tRNA(Ala), protecting cells against glycine mischarging by AlaRS. Acts via tRNA-based rather than protein-based catalysis; rejects L-amino acids rather than detecting D-amino acids in the active site. By recycling D-aminoacyl-tRNA to D-amino acids and free tRNA molecules, this enzyme counteracts the toxicity associated with the formation of D-aminoacyl-tRNA entities in vivo and helps enforce protein L-homochirality. The chain is D-aminoacyl-tRNA deacylase from Mycobacterium bovis (strain ATCC BAA-935 / AF2122/97).